The following is a 483-amino-acid chain: Arginine/agmatine antiporter (483 aa).

The next 12 membrane-spanning stretches (helical) occupy residues 11 to 31 (ILGT…GGIF), 41 to 61 (ASAG…FFIA), 85 to 105 (GFGP…QIFG), 124 to 144 (YFAG…IWIF), 157 to 177 (FVNI…ILIT), 208 to 228 (STML…VISG), 239 to 259 (ATIL…LLPF), 289 to 309 (VLMN…WTIL), 336 to 356 (PSFS…LVYF), 364 to 384 (MLEI…LFLV), 415 to 435 (LWLI…LLAL), and 458 to 478 (EILK…LFSA).

It belongs to the amino acid-polyamine-organocation (APC) superfamily. Basic amino acid/polyamine antiporter (APA) (TC 2.A.3.2) family.

The protein resides in the cell inner membrane. Functionally, catalyzes the exchange of L-arginine for agmatine. The arginine uptake by the bacterium in the macrophage may be a virulence factor against the host innate immune response. This is Arginine/agmatine antiporter (aaxC) from Chlamydia trachomatis serovar A (strain ATCC VR-571B / DSM 19440 / HAR-13).